The chain runs to 336 residues: Vacuolar protein sorting-associated protein 26B (336 aa).

Phosphoserine is present on residues S302, S304, and S319.

This sequence belongs to the VPS26 family. As to quaternary structure, component of the heterotrimeric retromer cargo-selective complex (CSC), also described as vacuolar protein sorting VPS subcomplex (VPS,) formed by VPS26 (VPS26A or VPS26B), VPS29 and VPS35. The CSC has a highly elongated structure with VPS26 and VPS29 binding independently at opposite distal ends of VPS35 as central platform. The CSC is believed to associate with variable sorting nexins to form functionally distinct retromer complex variants. The originally described retromer complex (also called SNX-BAR retromer) is a pentamer containing the CSC and a heterodimeric membrane-deforming subcomplex formed between SNX1 or SNX2 and SNX5 or SNX6 (also called SNX-BAR subcomplex); the respective CSC and SNX-BAR subcomplexes associate with low affinity. The CSC associates with SNX3 to form a SNX3-retromer complex. The CSC associates with SNX27, the WASH complex and the SNX-BAR subcomplex to form the SNX27-retromer complex. Interacts with VPS29, VPS35, TBC1D5, GOLPH3, SNX27.

The protein localises to the cytoplasm. Its subcellular location is the membrane. The protein resides in the early endosome. It is found in the late endosome. Functionally, acts as a component of the retromer cargo-selective complex (CSC). The CSC is believed to be the core functional component of retromer or respective retromer complex variants acting to prevent missorting of selected transmembrane cargo proteins into the lysosomal degradation pathway. The recruitment of the CSC to the endosomal membrane involves RAB7A and SNX3. The SNX-BAR retromer mediates retrograde transport of cargo proteins from endosomes to the trans-Golgi network (TGN) and is involved in endosome-to-plasma membrane transport for cargo protein recycling. The SNX3-retromer mediates the retrograde transport of WLS distinct from the SNX-BAR retromer pathway. The SNX27-retromer is believed to be involved in endosome-to-plasma membrane trafficking and recycling of a broad spectrum of cargo proteins. The CSC seems to act as recruitment hub for other proteins, such as the WASH complex and TBC1D5. May be involved in retrograde transport of SORT1 but not of IGF2R. Acts redundantly with VSP26A in SNX-27 mediated endocytic recycling of SLC2A1/GLUT1. In Homo sapiens (Human), this protein is Vacuolar protein sorting-associated protein 26B (VPS26B).